The sequence spans 382 residues: Glutaminyl-peptide cyclotransferase-like protein (382 aa).

The helical transmembrane segment at 35-55 (LLPLLLALAVGSAFYTIWSGW) threads the bilayer. The cysteines at positions 167 and 191 are disulfide-linked. Zn(2+) is bound at residue Asp-186. The active-site Proton acceptor is Glu-225. Glu-226 contacts Zn(2+). The active-site Proton acceptor is Asp-269. Position 351 (His-351) interacts with Zn(2+).

The protein belongs to the glutaminyl-peptide cyclotransferase family.

The protein localises to the golgi apparatus membrane. The enzyme catalyses N-terminal L-glutaminyl-[peptide] = N-terminal 5-oxo-L-prolyl-[peptide] + NH4(+). Functionally, responsible for the biosynthesis of pyroglutamyl peptides. The sequence is that of Glutaminyl-peptide cyclotransferase-like protein (QPCTL) from Homo sapiens (Human).